The sequence spans 83 residues: Spanin, outer lipoprotein subunit (83 aa).

The signal sequence occupies residues 1–50 (MSTLRELRLRRALKEQSMRYLLSIKKTLPRWKGALIGLFLICVATISGCA).

This sequence belongs to the T7likevirus o-spanin family. As to quaternary structure, homodimer. Interacts (via C-terminus) with the spanin inner membrane subunit (via C-terminus). Part of the spanin complex which spans the entire periplasmic space. The spanin complex is composed of spanin inner membrane subunit and spanin outer membrane subunit.

The protein resides in the host cell outer membrane. Functionally, component of the spanin complex that disrupts the host outer membrane and participates in cell lysis during virus exit. The spanin complex conducts the final step in host lysis by disrupting the outer membrane after holin and endolysin action have permeabilized the inner membrane and degraded the host peptidoglycans. Host outer membrane disruption is possibly due to local fusion between the inner and outer membrane performed by the spanin complex. The chain is Spanin, outer lipoprotein subunit from Escherichia phage T7 (Bacteriophage T7).